The chain runs to 87 residues: Putative sodium channel toxin Ts38 (87 aa).

The N-terminal stretch at 1 to 22 is a signal peptide; sequence MKHLKFYSILFLFSIFVYKVNA. Disulfide bonds link cysteine 42–cysteine 65, cysteine 51–cysteine 72, and cysteine 55–cysteine 74.

This sequence belongs to the long (3 C-C) scorpion toxin superfamily. Sodium channel inhibitor family. As to expression, expressed by the venom gland.

Its subcellular location is the secreted. In terms of biological role, putative sodium channel toxin. The protein is Putative sodium channel toxin Ts38 of Tityus serrulatus (Brazilian scorpion).